The sequence spans 210 residues: Putative truncated L-serine dehydratase SDL1 (210 aa).

This sequence belongs to the serine/threonine dehydratase family. Requires pyridoxal 5'-phosphate as cofactor.

Its subcellular location is the cytoplasm. It carries out the reaction L-serine = pyruvate + NH4(+). The protein operates within carbohydrate biosynthesis; gluconeogenesis. The sequence is that of Putative truncated L-serine dehydratase SDL1 (SDL1) from Saccharomyces cerevisiae (strain ATCC 204508 / S288c) (Baker's yeast).